The primary structure comprises 996 residues: Alanine--tRNA ligase, chloroplastic/mitochondrial (996 aa).

Residues His-677, His-681, Cys-779, and His-783 each contribute to the Zn(2+) site.

Belongs to the class-II aminoacyl-tRNA synthetase family. In terms of assembly, monomer. Requires Zn(2+) as cofactor.

It is found in the plastid. The protein resides in the chloroplast. The protein localises to the mitochondrion. The enzyme catalyses tRNA(Ala) + L-alanine + ATP = L-alanyl-tRNA(Ala) + AMP + diphosphate. Its function is as follows. Catalyzes the attachment of alanine to tRNA(Ala) in a two-step reaction: alanine is first activated by ATP to form Ala-AMP and then transferred to the acceptor end of tRNA(Ala). Also edits incorrectly charged tRNA(Ala) via its editing domain. The protein is Alanine--tRNA ligase, chloroplastic/mitochondrial of Oryza sativa subsp. japonica (Rice).